The sequence spans 307 residues: Small ribosomal subunit biogenesis GTPase RsgA (307 aa).

In terms of domain architecture, CP-type G spans 78-240; the sequence is HKTAFGHLIA…VIDTPGIKEL (163 aa). GTP is bound by residues 128 to 131 and 182 to 190; these read NKSD and GHSGVGKST. Zn(2+) is bound by residues C264, C269, H271, and C277.

The protein belongs to the TRAFAC class YlqF/YawG GTPase family. RsgA subfamily. Monomer. Associates with 30S ribosomal subunit, binds 16S rRNA. Zn(2+) serves as cofactor.

The protein localises to the cytoplasm. In terms of biological role, one of several proteins that assist in the late maturation steps of the functional core of the 30S ribosomal subunit. Helps release RbfA from mature subunits. May play a role in the assembly of ribosomal proteins into the subunit. Circularly permuted GTPase that catalyzes slow GTP hydrolysis, GTPase activity is stimulated by the 30S ribosomal subunit. This chain is Small ribosomal subunit biogenesis GTPase RsgA, found in Cytophaga hutchinsonii (strain ATCC 33406 / DSM 1761 / CIP 103989 / NBRC 15051 / NCIMB 9469 / D465).